Consider the following 255-residue polypeptide: ETS-related transcription factor Elf-5 (255 aa).

The region spanning 33–119 (YPAFEHQTAC…FILQSIRSQG (87 aa)) is the PNT domain. The ETS DNA-binding region spans 163-244 (SHLWEFVRDL…VDRRLVYKFG (82 aa)).

It belongs to the ETS family.

The protein resides in the nucleus. In terms of biological role, transcriptionally activator that may play a role in regulating the later stages of keratinocytes terminal differentiation. Binds to DNA sequences containing the consensus nucleotide core sequence GGA[AT]. This Bos taurus (Bovine) protein is ETS-related transcription factor Elf-5 (ELF5).